We begin with the raw amino-acid sequence, 274 residues long: Caldesmon, smooth muscle (274 aa).

Disordered stretches follow at residues 1–102 and 179–274; these read SNLK…FSPK and KGNV…EKEP. Basic and acidic residues-rich tracts occupy residues 12–21 and 28–95; these read GSEKLKEKQQ and DELK…EKKP. Residues 182 to 194 are compositionally biased toward polar residues; it reads VFSSPGGTGTPNK. Basic and acidic residues-rich tracts occupy residues 226–245 and 260–274; these read SDLR…KQSV and KKSE…EKEP.

It localises to the cytoplasm. It is found in the cytoskeleton. The protein resides in the myofibril. Its subcellular location is the stress fiber. Functionally, control of actomyosin interactions in smooth muscle and nonmuscle cells (could act as a bridge between myosin and actin filaments). Inhibits the actin-activated ATPase of myosin this inhibition is attenuated by calcium-calmodulin and is potentiated by tropomyosin. Interacts with actin, myosin, 2 molecules of tropomyosin and with calmodulin. The sequence is that of Caldesmon, smooth muscle (CALD1) from Meleagris gallopavo (Wild turkey).